Consider the following 156-residue polypeptide: Transcriptional repressor NrdR (156 aa).

A zinc finger spans residues 3 to 34; sequence CPFCQHGHSRVIDSRVIEAGSAIRRRRECSQC. Residues 46–136 enclose the ATP-cone domain; the sequence is LLVLKRNGVT…VYKSFESADD (91 aa).

The protein belongs to the NrdR family. Zn(2+) is required as a cofactor.

In terms of biological role, negatively regulates transcription of bacterial ribonucleotide reductase nrd genes and operons by binding to NrdR-boxes. The chain is Transcriptional repressor NrdR from Corynebacterium efficiens (strain DSM 44549 / YS-314 / AJ 12310 / JCM 11189 / NBRC 100395).